A 205-amino-acid chain; its full sequence is Small ribosomal subunit protein uS4 (205 aa).

The interval 1–46 (MSKRASSKYKIDRRMGENIWGRPKSPVNRREYGPGQHGQRRKGKLS) is disordered. An S4 RNA-binding domain is found at 94–154 (SRLDAIVYRA…QKSKQLAIVL (61 aa)).

It belongs to the universal ribosomal protein uS4 family. Part of the 30S ribosomal subunit. Contacts protein S5. The interaction surface between S4 and S5 is involved in control of translational fidelity.

One of the primary rRNA binding proteins, it binds directly to 16S rRNA where it nucleates assembly of the body of the 30S subunit. Its function is as follows. With S5 and S12 plays an important role in translational accuracy. The sequence is that of Small ribosomal subunit protein uS4 from Allorhizobium ampelinum (strain ATCC BAA-846 / DSM 112012 / S4) (Agrobacterium vitis (strain S4)).